A 187-amino-acid chain; its full sequence is Cytochrome b-245 chaperone 1 (187 aa).

The helical transmembrane segment at 20 to 42 (GIRSWSLLVGILSIGLAAAYYSG) threads the bilayer. Ser168 carries the phosphoserine modification.

The protein belongs to the CYBC1 family. In terms of assembly, interacts with CYBB; CYBC1 may act as a chaperone stabilizing Cytochrome b-245 heterodimer. In terms of tissue distribution, highly expressed in macrophages, neutrophils and monocytes.

It is found in the endoplasmic reticulum membrane. Functions as a chaperone necessary for a stable expression of the CYBA and CYBB subunits of the cytochrome b-245 heterodimer. Controls the phagocyte respiratory burst and is essential for innate immunity. The sequence is that of Cytochrome b-245 chaperone 1 from Homo sapiens (Human).